Reading from the N-terminus, the 247-residue chain is tRNA pseudouridine synthase A (247 aa).

Asp53 serves as the catalytic Nucleophile. Position 111 (Tyr111) interacts with substrate.

This sequence belongs to the tRNA pseudouridine synthase TruA family. In terms of assembly, homodimer.

The enzyme catalyses uridine(38/39/40) in tRNA = pseudouridine(38/39/40) in tRNA. Its function is as follows. Formation of pseudouridine at positions 38, 39 and 40 in the anticodon stem and loop of transfer RNAs. This chain is tRNA pseudouridine synthase A, found in Bacillus pumilus (strain SAFR-032).